The sequence spans 82 residues: MTHETPPPSYNDVMLQMFHDHSVFLHQENLSPRTINSTSSSEIKNVRRRGTFIILACLIISVILCLILILHIFNVRYGGTKP.

A PPXY motif motif is present at residues 7 to 10 (PPSY). Residues 52–72 (FIILACLIISVILCLILILHI) traverse the membrane as a helical segment.

Interacts with host ITCH; this interaction probably mediates ITCH degradation. Interacts probably with NEDD4.

It is found in the membrane. Down-regulates of the TCR/CD3E complex and the transferrin receptor TFRC in host T-cells by blocking them from recycling back to the cell surface. The polypeptide is U24 protein (Homo sapiens (Human)).